We begin with the raw amino-acid sequence, 204 residues long: Elongation factor Ts (204 aa).

The tract at residues 87-90 is involved in Mg(2+) ion dislocation from EF-Tu; that stretch reads TDFV.

The protein belongs to the EF-Ts family.

Its subcellular location is the cytoplasm. In terms of biological role, associates with the EF-Tu.GDP complex and induces the exchange of GDP to GTP. It remains bound to the aminoacyl-tRNA.EF-Tu.GTP complex up to the GTP hydrolysis stage on the ribosome. The polypeptide is Elongation factor Ts (Frankia alni (strain DSM 45986 / CECT 9034 / ACN14a)).